The following is a 383-amino-acid chain: D-alanine--D-alanine ligase (383 aa).

Residues 169-373 (KALLRAAGLP…YPQLVDRLVR (205 aa)) enclose the ATP-grasp domain. Residue 196–251 (QERLGLPVFVKPARGGSSIGISRVEAWADLDTAIKAARASDPKVLVESAIVGREIE) participates in ATP binding. Asp327, Glu340, and Asn342 together coordinate Mg(2+).

Belongs to the D-alanine--D-alanine ligase family. The cofactor is Mg(2+). Requires Mn(2+) as cofactor.

The protein localises to the cytoplasm. The catalysed reaction is 2 D-alanine + ATP = D-alanyl-D-alanine + ADP + phosphate + H(+). It functions in the pathway cell wall biogenesis; peptidoglycan biosynthesis. In terms of biological role, cell wall formation. The chain is D-alanine--D-alanine ligase from Frankia casuarinae (strain DSM 45818 / CECT 9043 / HFP020203 / CcI3).